A 353-amino-acid polypeptide reads, in one-letter code: Guanine nucleotide-binding protein subunit alpha (353 aa).

Residues 1-21 are disordered; that stretch reads MGCGMSTEEKEGKARNEEIEN. A lipid anchor (N-myristoyl glycine) is attached at Gly2. A lipid anchor (S-palmitoyl cysteine) is attached at Cys3. The segment covering 7–21 has biased composition (basic and acidic residues); sequence TEEKEGKARNEEIEN. One can recognise a G-alpha domain in the interval 32–353; that stretch reads NEIKMLLLGA…QENLRLCGLI (322 aa). The interval 35-48 is G1 motif; sequence KMLLLGAGESGKST. Glu43, Ser44, Gly45, Lys46, Ser47, Thr48, Asp150, Leu175, Thr181, Gly203, Asn269, Lys270, Asp272, and Ala325 together coordinate GTP. Ser47 contacts Mg(2+). The tract at residues 173–181 is G2 motif; the sequence is DVLRSRVKT. Mg(2+) is bound at residue Thr181. The tract at residues 196 to 205 is G3 motif; sequence YRMFDVGGQR. The interval 265–272 is G4 motif; sequence ILFLNKID. The tract at residues 323–328 is G5 motif; sequence TCATDT.

The protein belongs to the G-alpha family. G(q) subfamily. G proteins are composed of 3 units; alpha, beta and gamma. The alpha chain contains the guanine nucleotide binding site. It depends on Mg(2+) as a cofactor.

In terms of biological role, guanine nucleotide-binding proteins (G proteins) are involved as modulators or transducers in various transmembrane signaling systems. Plays a role in pathogenicity, specifically in appressorium formation in rice blast disease. Also involved in mating. The protein is Guanine nucleotide-binding protein subunit alpha (MAGB) of Pyricularia oryzae (strain 70-15 / ATCC MYA-4617 / FGSC 8958) (Rice blast fungus).